A 469-amino-acid chain; its full sequence is 3-isopropylmalate dehydratase large subunit (469 aa).

Cysteine 349, cysteine 410, and cysteine 413 together coordinate [4Fe-4S] cluster.

It belongs to the aconitase/IPM isomerase family. LeuC type 1 subfamily. Heterodimer of LeuC and LeuD. [4Fe-4S] cluster serves as cofactor.

The catalysed reaction is (2R,3S)-3-isopropylmalate = (2S)-2-isopropylmalate. The protein operates within amino-acid biosynthesis; L-leucine biosynthesis; L-leucine from 3-methyl-2-oxobutanoate: step 2/4. Its function is as follows. Catalyzes the isomerization between 2-isopropylmalate and 3-isopropylmalate, via the formation of 2-isopropylmaleate. The protein is 3-isopropylmalate dehydratase large subunit of Neisseria meningitidis serogroup C / serotype 2a (strain ATCC 700532 / DSM 15464 / FAM18).